Here is a 150-residue protein sequence, read N- to C-terminus: UPF0735 ACT domain-containing protein Csac_0995 (150 aa).

An ACT domain is found at 72 to 147 (TLALVLQDVP…GVKKIEILGR (76 aa)).

Belongs to the UPF0735 family.

This chain is UPF0735 ACT domain-containing protein Csac_0995, found in Caldicellulosiruptor saccharolyticus (strain ATCC 43494 / DSM 8903 / Tp8T 6331).